A 603-amino-acid polypeptide reads, in one-letter code: Serine palmitoyltransferase 2 (603 aa).

The helical transmembrane segment at 90-107 (YYYVVATYLTYLVLIIIG) threads the bilayer. Residue Lys398 is modified to N6-(pyridoxal phosphate)lysine.

It belongs to the class-II pyridoxal-phosphate-dependent aminotransferase family. Lcb1 and lcb2 encode essential subunits of the enzyme and form a heterodimer. Requires pyridoxal 5'-phosphate as cofactor.

It is found in the cytoplasm. The protein localises to the endoplasmic reticulum. It localises to the membrane. The catalysed reaction is L-serine + hexadecanoyl-CoA + H(+) = 3-oxosphinganine + CO2 + CoA. It functions in the pathway lipid metabolism; sphingolipid metabolism. Catalytic subunit of serine palmitoyltransferase (SPT), which catalyzes the committed step in the synthesis of sphingolipids, the condensation of serine with palmitoyl CoA to form the long chain base 3-ketosphinganine. The polypeptide is Serine palmitoyltransferase 2 (lcb2) (Schizosaccharomyces pombe (strain 972 / ATCC 24843) (Fission yeast)).